The primary structure comprises 281 residues: Phytanoyl-CoA dioxygenase 1 (281 aa).

Residues Lys-98, Met-137, 152–154 (HQD), and Trp-169 each bind 2-oxoglutarate. Residues His-152 and Asp-154 each coordinate Fe cation. His-237 serves as a coordination point for Fe cation. The 2-oxoglutarate site is built by Ser-239 and Arg-248.

Belongs to the PhyH family. The cofactor is Fe cation. Requires L-ascorbate as cofactor.

It catalyses the reaction phytanoyl-CoA + 2-oxoglutarate + O2 = 2-hydroxyphytanoyl-CoA + succinate + CO2. The protein operates within lipid metabolism; fatty acid metabolism. Functionally, converts phytanoyl-CoA to 2-hydroxyphytanoyl-CoA. This Oryza sativa subsp. japonica (Rice) protein is Phytanoyl-CoA dioxygenase 1.